The sequence spans 592 residues: Medium-chain-fatty-acid--[acyl-carrier-protein] ligase JamA (592 aa).

The protein belongs to the ATP-dependent AMP-binding enzyme family.

The enzyme catalyses a medium-chain fatty acid + holo-[ACP] + ATP = a medium-chain fatty acyl-[ACP] + AMP + diphosphate. It carries out the reaction a medium-chain fatty acid + ATP + H(+) = a medium-chain fatty acyl-AMP + diphosphate. It catalyses the reaction a medium-chain fatty acyl-AMP + holo-[ACP] = a medium-chain fatty acyl-[ACP] + AMP + H(+). Functionally, ligase involved in the biosynthesis of jamaicamides, which show sodium channel blocking activity and fish toxicity. Initiates jamaicamide biosynthesis by the activation of the starter unit, 5-hexenoic acid, followed by the loading of the activated 5-hexenoic acid onto the acyl carrier protein JamC. In vitro, can also use 5-hexynoic acid, heptanoic acid, butanoic acid, hexanoic acid and benzoic acid. The chain is Medium-chain-fatty-acid--[acyl-carrier-protein] ligase JamA from Moorena producens (strain JHB).